The following is a 646-amino-acid chain: uncharacterized protein (646 aa).

8 helical membrane-spanning segments follow: residues 20–42 (ILSRQSTLLIQWSIVVLAGLYLL), 55–77 (FLAGVILRIVLLAGVSVELIHQV), 97–115 (LLHFLLYGYVLLTAFHYML), 127–149 (YTFDLAVVSLPIVQMIFSFFSYW), 159–181 (IAFVFLFFIITLPIALNVVFFKL), 188–206 (ILLGLFYTLIIGLLVLLLA), 216–238 (YGAVMPYTIYLAMAGFLMSYHLF), and 251–273 (WVTMAVMVFFVLLLNPIYNIGTA).

It is found in the cell membrane. This is an uncharacterized protein from Bacillus subtilis (strain 168).